Here is a 200-residue protein sequence, read N- to C-terminus: Fibrillarin-like rRNA/tRNA 2'-O-methyltransferase (200 aa).

Residues 62–63 (TT), 78–79 (EF), 103–104 (DA), and 123–126 (DVAQ) contribute to the S-adenosyl-L-methionine site.

The protein belongs to the methyltransferase superfamily. Fibrillarin family. As to quaternary structure, interacts with nop5. Component of box C/D small ribonucleoprotein (sRNP) particles that contain rpl7ae, FlpA and nop5, plus a guide RNA.

In terms of biological role, involved in pre-rRNA and tRNA processing. Utilizes the methyl donor S-adenosyl-L-methionine to catalyze the site-specific 2'-hydroxyl methylation of ribose moieties in rRNA and tRNA. Site specificity is provided by a guide RNA that base pairs with the substrate. Methylation occurs at a characteristic distance from the sequence involved in base pairing with the guide RNA. This chain is Fibrillarin-like rRNA/tRNA 2'-O-methyltransferase, found in Methanoculleus marisnigri (strain ATCC 35101 / DSM 1498 / JR1).